The following is an 84-amino-acid chain: uncharacterized protein (84 aa).

This is an uncharacterized protein from Bacillus subtilis (strain 168).